Reading from the N-terminus, the 142-residue chain is Putative pre-16S rRNA nuclease (142 aa).

It belongs to the YqgF nuclease family.

The protein resides in the cytoplasm. Its function is as follows. Could be a nuclease involved in processing of the 5'-end of pre-16S rRNA. The polypeptide is Putative pre-16S rRNA nuclease (Desulfitobacterium hafniense (strain DSM 10664 / DCB-2)).